The primary structure comprises 147 residues: Neocarzinostatin (147 aa).

Residues Met-1–Ala-34 form the signal peptide. Cystine bridges form between Cys-71–Cys-81 and Cys-122–Cys-127.

The protein belongs to the neocarzinostatin family.

Its function is as follows. NCS has antibiotic activity (for Gram-positive bacteria) and antitumor activity (for certain mouse tumors). NCS binds non-covalently to a chromophore which is the cytotoxic and mutagenic component of the antibiotic. The chromophore binds to DNA as a weak intercalator and causes single- and double-strand breaks. The polypeptide is Neocarzinostatin (ncsA) (Streptomyces carzinostaticus).